We begin with the raw amino-acid sequence, 96 residues long: Ubiquitin-related modifier 1 (96 aa).

The residue at position 96 (Gly-96) is a 1-thioglycine. Gly-96 participates in a covalent cross-link: Glycyl lysine isopeptide (Gly-Lys) (interchain with K-? in acceptor proteins).

It belongs to the URM1 family. In terms of processing, C-terminal thiocarboxylation occurs in 2 steps, it is first acyl-adenylated (-COAMP) via the hesA/moeB/thiF part of UBA4, then thiocarboxylated (-COSH) via the rhodanese domain of UBA4.

It is found in the cytoplasm. The protein operates within tRNA modification; 5-methoxycarbonylmethyl-2-thiouridine-tRNA biosynthesis. Acts as a sulfur carrier required for 2-thiolation of mcm(5)S(2)U at tRNA wobble positions of cytosolic tRNA(Lys), tRNA(Glu) and tRNA(Gln). Serves as sulfur donor in tRNA 2-thiolation reaction by being thiocarboxylated (-COSH) at its C-terminus by the MOCS3 homolog UBA4. The sulfur is then transferred to tRNA to form 2-thiolation of mcm(5)S(2)U. Prior mcm(5) tRNA modification by the elongator complex is required for 2-thiolation. Also acts as a ubiquitin-like protein (UBL) that is covalently conjugated via an isopeptide bond to lysine residues of target proteins such as AHP1. The thiocarboxylated form serves as substrate for conjugation and oxidative stress specifically induces the formation of UBL-protein conjugates. This chain is Ubiquitin-related modifier 1, found in Encephalitozoon cuniculi (strain GB-M1) (Microsporidian parasite).